We begin with the raw amino-acid sequence, 569 residues long: MKKLWKKGLVAFLALTLIFQLIPGFASAADSRLKDGGEYQVQVNFYKDNTGKTTKESSEADKYIDHTATIKVENGQPYMYLTITNSTWWQTMAVSKNGTRPEKPAQADVYQDRYEDVQTVSTDAAKDTRVEKFKLSSLDDVIFSYMHIKVDAISYDHWYQVDLTIDPSTFKVISEPAVTTPVTLSDGIYTIPFVAKKANDDSNSSMQNYFNNPAWLKVKNGKKMVAMTVNDNKTVTALKTTLAGTLQDVKVVSEDKDANTRIVEFEVEDLNQPLAAHVNYEAPFNGSVYKGQADFRYVFDTAKATAASSYPGSDETPPVVNPGETNPPVTKPDPGTTNPPVTTPPTTPSKPAVVDPKNLLNNHTYSIDFDVFKDGTTETSMMESYVMKPALIKVENNQPYVYLTLTNSSWIKTFQYKVNGVWKDMEVVSGDINKNTRTVKYPVKDGTANTDVKTHVLIEDMPGFSYDHEYTVQVKLNAATIKDITGKDVTLKEPVKKDILNTGNVASNNNAGPKLAKPDFDDTNSVQKTASKTEKNAKTNDSSSMVWYITLFGASFLYLAYRLKRKRLS.

A signal peptide spans Met-1–Ala-28. NEAT domains lie at Lys-34–Ile-173, Leu-184–Ala-307, and Leu-360–Ile-484. Heme contacts are provided by residues Ser-204–Ser-205, Tyr-280, and Tyr-289. The disordered stretch occupies residues Ala-307–Lys-357. Residues Thr-502–Ala-511 show a composition bias toward polar residues. The interval Thr-502 to Ala-537 is disordered. Positions Asn-536–Asn-540 match the NXZTN sorting signal motif. Pentaglycyl murein peptidoglycan amidated threonine is present on Thr-539. Positions Asn-540–Ser-569 are cleaved as a propeptide — removed by sortase B.

The protein localises to the cell surface. It is found in the secreted. It localises to the cell wall. With respect to regulation, is overexpressed in mecA, clpC and clpP mutants, suggesting the protein level is controlled by MecA, ClpC and ClpP (at protein level). Its function is as follows. Acts as an extracellular and cell wall-bound hemophore; scavenges host heme and hemoglobin from the environment and also serves as a cell wall receptor for both. At low hemin (Hn) and hemoglobin (Hb) concentrations adsorbs Hn/Hb and presumably directs it to membrane transporters. Soluble Hbp2 can probably pass Hn/Hb to cell wall-anchored Hbp2, and both forms can accept Hn/Hb from Hbp1. May be involved in crossing the digestive barrier in infected animals. Binds host hemin. Binds host hemoglobin with affinity in the nanomolar range. The polypeptide is Hemin/hemoglobin-binding protein 2 (Listeria monocytogenes serovar 1/2a (strain ATCC BAA-679 / EGD-e)).